The sequence spans 389 residues: Chaperone protein DnaJ (389 aa).

The region spanning 5 to 79 is the J domain; that stretch reads KRDYYEVLGI…RKLYDQFGHE (75 aa). Residues 151–234 form a CR-type zinc finger; it reads GCNKTIKYER…CRSNKYTVTN (84 aa). Zn(2+)-binding residues include C164, C167, C182, C185, C208, C211, C222, and C225. 4 CXXCXGXG motif repeats span residues 164–171, 182–189, 208–215, and 222–229; these read CHSCNGFG, CKDCNGNG, CSTCNGQG, and CKTCRSNK.

Belongs to the DnaJ family. In terms of assembly, homodimer. Zn(2+) serves as cofactor.

It localises to the cytoplasm. Its function is as follows. Participates actively in the response to hyperosmotic and heat shock by preventing the aggregation of stress-denatured proteins and by disaggregating proteins, also in an autonomous, DnaK-independent fashion. Unfolded proteins bind initially to DnaJ; upon interaction with the DnaJ-bound protein, DnaK hydrolyzes its bound ATP, resulting in the formation of a stable complex. GrpE releases ADP from DnaK; ATP binding to DnaK triggers the release of the substrate protein, thus completing the reaction cycle. Several rounds of ATP-dependent interactions between DnaJ, DnaK and GrpE are required for fully efficient folding. Also involved, together with DnaK and GrpE, in the DNA replication of plasmids through activation of initiation proteins. In Mycoplasma genitalium (strain ATCC 33530 / DSM 19775 / NCTC 10195 / G37) (Mycoplasmoides genitalium), this protein is Chaperone protein DnaJ.